A 278-amino-acid chain; its full sequence is Alcohol dehydrogenase-related 31 kDa protein (278 aa).

11–34 (YVADCGGIALETSKVLMTKNIAKL) lines the NAD(+) pocket. Ser139 contributes to the substrate binding site. Residue Tyr152 is the Proton acceptor of the active site.

This sequence belongs to the short-chain dehydrogenases/reductases (SDR) family.

The protein is Alcohol dehydrogenase-related 31 kDa protein (Adhr) of Drosophila persimilis (Fruit fly).